A 519-amino-acid polypeptide reads, in one-letter code: Aldehyde dehydrogenase X, mitochondrial (519 aa).

The N-terminal 19 residues, 1-19, are a transit peptide targeting the mitochondrion; sequence MLNARFLVPRLLCLQGRTT. Lys-53 carries the N6-acetyllysine modification. Lys-54 is subject to N6-acetyllysine; alternate. Lys-54 carries the post-translational modification N6-succinyllysine; alternate. 264–269 lines the NAD(+) pocket; it reads GSTEVG. Residue Glu-287 is the Proton acceptor of the active site. Cys-321 serves as the catalytic Nucleophile. Lys-366, Lys-385, Lys-401, and Lys-428 each carry N6-acetyllysine; alternate. An N6-succinyllysine; alternate mark is found at Lys-366, Lys-385, Lys-401, and Lys-428. Residue Lys-431 is modified to N6-acetyllysine.

This sequence belongs to the aldehyde dehydrogenase family. As to quaternary structure, homotetramer.

It is found in the mitochondrion matrix. It catalyses the reaction an aldehyde + NAD(+) + H2O = a carboxylate + NADH + 2 H(+). Its pathway is alcohol metabolism; ethanol degradation; acetate from ethanol: step 2/2. ALDHs play a major role in the detoxification of alcohol-derived acetaldehyde. They are involved in the metabolism of corticosteroids, biogenic amines, neurotransmitters, and lipid peroxidation. The protein is Aldehyde dehydrogenase X, mitochondrial (Aldh1b1) of Rattus norvegicus (Rat).